The primary structure comprises 390 residues: Elongation factor Ts, mitochondrial (390 aa).

Belongs to the EF-Ts family.

It is found in the mitochondrion. Associates with the EF-Tu.GDP complex and induces the exchange of GDP to GTP. It remains bound to the aminoacyl-tRNA.EF-Tu.GTP complex up to the GTP hydrolysis stage on the ribosome. In Plasmodium vivax (strain Salvador I), this protein is Elongation factor Ts, mitochondrial.